A 257-amino-acid chain; its full sequence is Receptor expression-enhancing protein 4 (257 aa).

2 consecutive transmembrane segments (helical) span residues 1 to 21 (MVSWMICRLVVLIFGMLYPAY) and 42 to 62 (WIVFAIFMAAETFTDIFISWF). Phosphoserine occurs at positions 152 and 194. Residues 159 to 257 (IPDTSAPTYQ…KKTIPSDLDS (99 aa)) form a disordered region. Thr196 bears the Phosphothreonine mark. Ser202 carries the post-translational modification Phosphoserine. Position 250 is a phosphothreonine (Thr250). Position 253 is a phosphoserine (Ser253).

Belongs to the DP1 family.

It is found in the endoplasmic reticulum membrane. In terms of biological role, microtubule-binding protein required to ensure proper cell division and nuclear envelope reassembly by sequestering the endoplasmic reticulum away from chromosomes during mitosis. Probably acts by clearing the endoplasmic reticulum membrane from metaphase chromosomes. The polypeptide is Receptor expression-enhancing protein 4 (Reep4) (Rattus norvegicus (Rat)).